The chain runs to 362 residues: Prostaglandin E2 receptor EP2 subtype (362 aa).

Residues 1 to 24 (MDNFLNDSKLMEDCKSRQWLLSGE) lie on the Extracellular side of the membrane. An N-linked (GlcNAc...) asparagine glycan is attached at Asn-6. A helical transmembrane segment spans residues 25–48 (SPAISSVMFSAGVLGNLIALALLA). The Cytoplasmic portion of the chain corresponds to 49-66 (RRWRGDTGCSAGSRTSIS). Residues 67 to 92 (LFHVLVTELVLTDLLGTCLISPVVLA) form a helical membrane-spanning segment. At 93–112 (SYSRNQTLVALAPESHACTY) the chain is on the extracellular side. Cys-110 and Cys-188 are oxidised to a cystine. A helical transmembrane segment spans residues 113–133 (FAFTMTFFSLATMLMLFAMAL). The Cytoplasmic segment spans residues 134–152 (ERYLSIGYPYFYRRHLSRR). The helical transmembrane segment at 153–177 (GGLAVLPVIYGASLLFCSLPLLNYG) threads the bilayer. Residues 178-199 (EYVQYCPGTWCFIRHGRTAYLQ) are Extracellular-facing. A helical membrane pass occupies residues 200–224 (LYATMLLLLIVAVLACNISVILNLI). Over 225-262 (RMHRRSRRSRCGLSGSSLRGPGSRRRGERTSMAEETDH) the chain is Cytoplasmic. Residues 234–255 (RCGLSGSSLRGPGSRRRGERTS) are disordered. Over residues 235–245 (CGLSGSSLRGP) the composition is skewed to low complexity. Residues 263–286 (LILLAIMTITFAICSLPFTIFAYM) form a helical membrane-spanning segment. Topologically, residues 287–299 (DETSSLKEKWDLR) are extracellular. Residues 300–323 (ALRFLSVNSIIDPWVFAILRPPVL) traverse the membrane as a helical segment. Residues 324 to 362 (RLMRSVLCCRTSLRTQEAQQTSCSTQSSASKQTDLCGQL) lie on the Cytoplasmic side of the membrane.

It belongs to the G-protein coupled receptor 1 family.

The protein localises to the cell membrane. Receptor for prostaglandin E2 (PGE2). The activity of this receptor is mediated by G(s) proteins that stimulate adenylate cyclase. The subsequent raise in intracellular cAMP is responsible for the relaxing effect of this receptor on smooth muscle. This chain is Prostaglandin E2 receptor EP2 subtype (Ptger2), found in Mus musculus (Mouse).